Reading from the N-terminus, the 449-residue chain is MGRLFGTDGVRGVANLELTAELAYKLGQAGAYVLTSETKHTPKILVGMDTRISGDMLEASLVAGLCSVGAEVACLGIAPTPTVAYLTRYYNADAGVVISASHNPYEFNGIKFFNSKGYKLSDALEERIESIILDNSEKIQLPTGEKIGRKIEIESPLDDYVNFIKSTIKGDLKGLKVAIDCANGASYQVAPVTFFELGADVCVINNEPDGVNINKDCGSTHIEQLQKFVIESGADVGLAFDGDADRVLAVDENGNMVDGDQIMAIIGLELKKQGKLTNNTIVATVMSNLGLDIMAKREGINIVKTKVGDRYVLENMLENGHVLGGEQSGHIIFLEHSTTGDGILTGAQLLNVVKSSGKKLSELASIMQVLPQVLMNARVSNQNKEKYLEDEVICEMCKELENEFRDEGRVLIRPSGTEPLVRVMIEGKDRDYIEKRALELVKVIEERLG.

The active-site Phosphoserine intermediate is the serine 101. Mg(2+) contacts are provided by serine 101, aspartate 241, aspartate 243, and aspartate 245. Serine 101 carries the post-translational modification Phosphoserine.

Belongs to the phosphohexose mutase family. The cofactor is Mg(2+). Post-translationally, activated by phosphorylation.

The enzyme catalyses alpha-D-glucosamine 1-phosphate = D-glucosamine 6-phosphate. Catalyzes the conversion of glucosamine-6-phosphate to glucosamine-1-phosphate. In Acetivibrio thermocellus (strain ATCC 27405 / DSM 1237 / JCM 9322 / NBRC 103400 / NCIMB 10682 / NRRL B-4536 / VPI 7372) (Clostridium thermocellum), this protein is Phosphoglucosamine mutase.